Here is a 315-residue protein sequence, read N- to C-terminus: MGDRTITYSPAFTLVPTYECFNRCTYCNFRQDIGTRGWLTLKAAAKQLAELDPQRVREILILSGEVAPNSPQRSKWLERLYDLAALALDQGFLPHTNAGPLTRAEMTALKAVNVSMGLMLEQLTPKLLQGVHRHAPSKDPQLRLHQLEQAGELGIPFTTGLLLGIGEAPQDWAETLTAIAEGHRRWGHIQEVILQPHSPGQQQAERLPPFDLKQLPQVVQWARSLLPEDITIQIPANLVTEPEVFRACLEAGARDLGGIVPLDHVNPDYPHTDLAVLKEQLQAWGWELVPRLPVYPQFVDWLPPPLKEKVKEIPV.

The region spanning 6–237 (ITYSPAFTLV…EDITIQIPAN (232 aa)) is the Radical SAM core domain. The [4Fe-4S] cluster site is built by C20, C24, and C27.

The protein belongs to the radical SAM superfamily. CofG family. As to quaternary structure, consists of two subunits, CofG and CofH. [4Fe-4S] cluster serves as cofactor.

The catalysed reaction is 5-amino-5-(4-hydroxybenzyl)-6-(D-ribitylimino)-5,6-dihydrouracil + S-adenosyl-L-methionine = 7,8-didemethyl-8-hydroxy-5-deazariboflavin + 5'-deoxyadenosine + L-methionine + NH4(+) + H(+). The protein operates within cofactor biosynthesis; coenzyme F0 biosynthesis. Catalyzes the radical-mediated synthesis of 7,8-didemethyl-8-hydroxy-5-deazariboflavin from 5-amino-5-(4-hydroxybenzyl)-6-(D-ribitylimino)-5,6-dihydrouracil. This Thermosynechococcus vestitus (strain NIES-2133 / IAM M-273 / BP-1) protein is 7,8-didemethyl-8-hydroxy-5-deazariboflavin synthase.